Here is a 252-residue protein sequence, read N- to C-terminus: MISIDLNCDLGEGFGAYQIGNDDAILPFVSSVNIACGFHAGDPSIMRQTVEKALQHDVEIGAHPGFPDLIGFGRRIIGVSPDEVYNYVVYQIGALDGFVRAAGGKMHHVKPHGALYNMAATNLEIAEAIARAIHDINPKLYLYGLANSAFIQAVKKYELRLVQEAFADRTYQPDGTLTSRTEKYALIKNEETAIHQVLQMVQEGKIKAMDGTVITMHPQTICLHGDGEKAVQFAERIYRTFRLNGIFVCAPK.

Belongs to the LamB/PxpA family. In terms of assembly, forms a complex composed of PxpA, PxpB and PxpC.

It carries out the reaction 5-oxo-L-proline + ATP + 2 H2O = L-glutamate + ADP + phosphate + H(+). Its function is as follows. Catalyzes the cleavage of 5-oxoproline to form L-glutamate coupled to the hydrolysis of ATP to ADP and inorganic phosphate. In Bacillus cytotoxicus (strain DSM 22905 / CIP 110041 / 391-98 / NVH 391-98), this protein is 5-oxoprolinase subunit A.